We begin with the raw amino-acid sequence, 95 residues long: MSKKKGFWSSLFGTDDSNAGSANMATERLKVIVASENRLNNRLTADRIEKMKREILEVVNKYVNGVQIDDVNINHRSEDSLDVLEMNINLPEHKK.

The protein belongs to the MinE family.

Its function is as follows. Prevents the cell division inhibition by proteins MinC and MinD at internal division sites while permitting inhibition at polar sites. This ensures cell division at the proper site by restricting the formation of a division septum at the midpoint of the long axis of the cell. In Psychrobacter cryohalolentis (strain ATCC BAA-1226 / DSM 17306 / VKM B-2378 / K5), this protein is Cell division topological specificity factor.